We begin with the raw amino-acid sequence, 229 residues long: MLSGLIQRFEEEKMKHNQDRVEEPSQVRVDDTISQPPRYAPSAPMPSSMPTVALEILDKAMSNTTGATQTQKAEKAAFASYAGVARDDVRLRQIKRHVNEQILPKLKSDLSGLKKKRAIIHTTLLVAAVVALLTSVCTLSSDMSVAFKINGTKTEVPSWFKSLNPMLGVVNLGATFLMMVCAKSERALNQQIDMIKKEVMKKQSYNDAVRMSFTEFSSIPLDGLEMPLT.

The span at 13–31 (KMKHNQDRVEEPSQVRVDD) shows a compositional bias: basic and acidic residues. A disordered region spans residues 13-46 (KMKHNQDRVEEPSQVRVDDTISQPPRYAPSAPMP). Positions 36 to 46 (PPRYAPSAPMP) are enriched in low complexity. 2 helical membrane-spanning segments follow: residues 119–139 (IIHTTLLVAAVVALLTSVCTL) and 162–182 (SLNPMLGVVNLGATFLMMVCA).

The protein belongs to the orbivirus NS3 family. Forms homooligomers via coiled-coil motif. Interacts with host OPTN; this interaction inhibits innate immune response.

It localises to the host cell membrane. The protein localises to the host Golgi apparatus. Functionally, plays a role in the inhibition of host innate immune response. Interacts with host OPTN and thus inhibits the recruitment of TBK1 to the host Golgi apparatus. In turn, downstream partner IRF3 cannot be activated and IFN-beta production is impaired. In terms of biological role, facilitates viral particle release either by increasing plasma membrane permeability through a viroporin-like activity or by viral budding. This chain is Non-structural protein P8 (Segment-10), found in Antilocapra americana (Pronghorn).